The sequence spans 287 residues: Phosphatidylserine decarboxylase proenzyme (287 aa).

Residues aspartate 89, histidine 146, and serine 252 each act as charge relay system; for autoendoproteolytic cleavage activity in the active site. The active-site Schiff-base intermediate with substrate; via pyruvic acid; for decarboxylase activity is the serine 252. Serine 252 carries the post-translational modification Pyruvic acid (Ser); by autocatalysis.

It belongs to the phosphatidylserine decarboxylase family. PSD-B subfamily. Prokaryotic type I sub-subfamily. Heterodimer of a large membrane-associated beta subunit and a small pyruvoyl-containing alpha subunit. Pyruvate serves as cofactor. Post-translationally, is synthesized initially as an inactive proenzyme. Formation of the active enzyme involves a self-maturation process in which the active site pyruvoyl group is generated from an internal serine residue via an autocatalytic post-translational modification. Two non-identical subunits are generated from the proenzyme in this reaction, and the pyruvate is formed at the N-terminus of the alpha chain, which is derived from the carboxyl end of the proenzyme. The autoendoproteolytic cleavage occurs by a canonical serine protease mechanism, in which the side chain hydroxyl group of the serine supplies its oxygen atom to form the C-terminus of the beta chain, while the remainder of the serine residue undergoes an oxidative deamination to produce ammonia and the pyruvoyl prosthetic group on the alpha chain. During this reaction, the Ser that is part of the protease active site of the proenzyme becomes the pyruvoyl prosthetic group, which constitutes an essential element of the active site of the mature decarboxylase.

Its subcellular location is the cell membrane. The enzyme catalyses a 1,2-diacyl-sn-glycero-3-phospho-L-serine + H(+) = a 1,2-diacyl-sn-glycero-3-phosphoethanolamine + CO2. It participates in phospholipid metabolism; phosphatidylethanolamine biosynthesis; phosphatidylethanolamine from CDP-diacylglycerol: step 2/2. Functionally, catalyzes the formation of phosphatidylethanolamine (PtdEtn) from phosphatidylserine (PtdSer). This Shewanella woodyi (strain ATCC 51908 / MS32) protein is Phosphatidylserine decarboxylase proenzyme.